A 60-amino-acid chain; its full sequence is Large ribosomal subunit protein bL32 (60 aa).

Belongs to the bacterial ribosomal protein bL32 family.

This Pediococcus pentosaceus (strain ATCC 25745 / CCUG 21536 / LMG 10740 / 183-1w) protein is Large ribosomal subunit protein bL32.